Reading from the N-terminus, the 88-residue chain is Kunitz-type kappaPI-theraphotoxin-Hs1a (88 aa).

The signal sequence occupies residues 1–27 (MGIARILSAVLFLSVLFVVTFPALLSA). The propeptide occupies 28-33 (DHHDGR). The region spanning 37–85 (CRLPSDRGRCKASFERWYFNGRTCAKFIYGGCGGNGNKFPTQEACMKRC) is the BPTI/Kunitz inhibitor domain. 3 disulfides stabilise this stretch: cysteine 37–cysteine 85, cysteine 46–cysteine 68, and cysteine 60–cysteine 81.

It belongs to the venom Kunitz-type family. 02 (native) subfamily. Expressed by the venom gland.

The protein resides in the secreted. In terms of biological role, serine protease inhibitor that inhibits trypsin (Ki=5.54 uM) at a molar ratio of 1:1. This is Kunitz-type kappaPI-theraphotoxin-Hs1a from Cyriopagopus schmidti (Chinese bird spider).